Reading from the N-terminus, the 244-residue chain is Glutathione S-transferase theta-2 (244 aa).

Residues 2 to 82 form the GST N-terminal domain; that stretch reads GLELFLDLVS…YLSCKYQTPD (81 aa). Glutathione is bound by residues 40-41, 53-54, 66-67, and 104-107; these read HK, KL, ES, and DCIR. A GST C-terminal domain is found at 88–224; it reads DLQARARVHE…SILEQAAKKT (137 aa).

Belongs to the GST superfamily. Theta family. In terms of assembly, homodimer. In terms of tissue distribution, expressed at low levels in liver. In lung, expressed at low levels in ciliated bronchiolar cells, alveolar macrophages and alveolar type II cells.

Its subcellular location is the cytoplasm. The protein resides in the cytosol. It is found in the nucleus. It carries out the reaction RX + glutathione = an S-substituted glutathione + a halide anion + H(+). Its function is as follows. Conjugation of reduced glutathione to a wide number of exogenous and endogenous hydrophobic electrophiles. Has a sulfatase activity. This is Glutathione S-transferase theta-2 (GSTT2) from Homo sapiens (Human).